Consider the following 526-residue polypeptide: Cytochrome P450 monooxygenase 226 (526 aa).

A helical membrane pass occupies residues 15–35 (FATSYAALTVAAVTLLAALLV). N-linked (GlcNAc...) asparagine glycans are attached at residues asparagine 219, asparagine 277, and asparagine 320. Cysteine 452 lines the heme pocket.

The protein belongs to the cytochrome P450 family. Requires heme as cofactor.

The protein localises to the membrane. Its pathway is secondary metabolite biosynthesis. Functionally, cytochrome P450 monooxygenase that is able to use anthracene, carbazole and phenanthrene as substrates for oxidation. These multifunctional properties against a series of polycyclic aromatic hydrocarbons (PAHs) suggest that CYP226 would play important roles, at least in part, in fungal metabolic systems involved in xenobiotic detoxification. The sequence is that of Cytochrome P450 monooxygenase 226 from Postia placenta (strain ATCC 44394 / Madison 698-R) (Brown rot fungus).